A 225-amino-acid polypeptide reads, in one-letter code: MLVVFLCLLSVTLEATEGFKNLSGKVLQFKTATDNSYVKLYPEKPLSLSAFTLCMRVATELPLDREVILFAYYTPDVDELNVWRERDGRVSLYIQSSKDAAFFRLPPLSTLQTHLCVAWESATGLTAFWMDGRRSLHQVYRKGYSIRSGGTVVLGQDPDSYVGSFDVDQSFVGEIANLQMWDYVLSSAQIKAVYYNQDNRVKGNVFDWDTIEYDVTGNVLVATDN.

An N-terminal signal peptide occupies residues 1–18 (MLVVFLCLLSVTLEATEG). One can recognise a Pentraxin (PTX) domain in the interval 23–225 (SGKVLQFKTA…TGNVLVATDN (203 aa)). A disulfide bridge links cysteine 54 with cysteine 116. The Ca(2+) site is built by aspartate 78, aspartate 157, proline 158, aspartate 159, and glutamine 169.

Belongs to the pentraxin family. As to quaternary structure, homotrimer. Ca(2+) is required as a cofactor.

It localises to the secreted. Displays several functions associated with host defense: it promotes agglutination, bacterial capsular swelling, phagocytosis, and complement fixation through its calcium-dependent binding to phosphorylcholine. This chain is C-reactive protein, found in Danio rerio (Zebrafish).